We begin with the raw amino-acid sequence, 63 residues long: Acrosin inhibitor 1 (63 aa).

The Kazal-like domain maps to 8–63 (FGFPPDCKVYTEACTREYNPICDSAAKTYSNECTFCNEKMNNDADIHFNHFGECEY). Disulfide bonds link Cys14-Cys43, Cys21-Cys40, and Cys29-Cys61.

Seminal plasma.

It localises to the secreted. In terms of biological role, strong inhibitor of acrosin. This is Acrosin inhibitor 1 from Bos taurus (Bovine).